A 324-amino-acid chain; its full sequence is Beta-ketoacyl-[acyl-carrier-protein] synthase III (324 aa).

Residues Cys-112 and His-249 contribute to the active site. The interval 250–254 (QANDR) is ACP-binding. Asn-279 is a catalytic residue.

The protein belongs to the thiolase-like superfamily. FabH family. In terms of assembly, homodimer.

The protein resides in the cytoplasm. The enzyme catalyses malonyl-[ACP] + acetyl-CoA + H(+) = 3-oxobutanoyl-[ACP] + CO2 + CoA. It participates in lipid metabolism; fatty acid biosynthesis. Its function is as follows. Catalyzes the condensation reaction of fatty acid synthesis by the addition to an acyl acceptor of two carbons from malonyl-ACP. Catalyzes the first condensation reaction which initiates fatty acid synthesis and may therefore play a role in governing the total rate of fatty acid production. Possesses both acetoacetyl-ACP synthase and acetyl transacylase activities. Its substrate specificity determines the biosynthesis of branched-chain and/or straight-chain of fatty acids. This chain is Beta-ketoacyl-[acyl-carrier-protein] synthase III, found in Streptococcus gordonii (strain Challis / ATCC 35105 / BCRC 15272 / CH1 / DL1 / V288).